Reading from the N-terminus, the 141-residue chain is MSIVIGADAAGLRLKEVVKDFLEKENFHLVDVTAEGQDFVDVTLAVAAEVNKEEQNLGIVIDAYGAGPFMVATKIKGMVAAEVSDERSAYMTRGHNNSRMITMGAQLVGDELAKNIAKGFVNGKYDGGRHQIRVDMLNKMC.

The protein belongs to the LacAB/RpiB family. Heteromultimeric protein consisting of LacA and LacB.

The enzyme catalyses aldehydo-D-galactose 6-phosphate = keto-D-tagatose 6-phosphate. It functions in the pathway carbohydrate metabolism; D-galactose 6-phosphate degradation; D-tagatose 6-phosphate from D-galactose 6-phosphate: step 1/1. In Streptococcus pneumoniae (strain P1031), this protein is Galactose-6-phosphate isomerase subunit LacA.